We begin with the raw amino-acid sequence, 714 residues long: Developmentally-regulated protein kinase 1 (714 aa).

2 disordered regions span residues 88 to 122 (NNNI…NNFN) and 174 to 266 (CNMI…IINN). 3 stretches are compositionally biased toward low complexity: residues 174-200 (CNMI…NNNN), 209-227 (PSSN…TTSS), and 240-266 (NFNQ…IINN). Residues 334–589 (FNFYGSLGSG…SCSIRNHKWF (256 aa)) enclose the Protein kinase domain. ATP is bound by residues 340–348 (LGSGSFGTA) and lysine 363. Catalysis depends on aspartate 457, which acts as the Proton acceptor. Residue threonine 488 is modified to Phosphothreonine.

It belongs to the protein kinase superfamily. AGC Ser/Thr protein kinase family.

The enzyme catalyses L-seryl-[protein] + ATP = O-phospho-L-seryl-[protein] + ADP + H(+). The catalysed reaction is L-threonyl-[protein] + ATP = O-phospho-L-threonyl-[protein] + ADP + H(+). The protein is Developmentally-regulated protein kinase 1 (pkaD) of Dictyostelium discoideum (Social amoeba).